Here is a 1968-residue protein sequence, read N- to C-terminus: Signal element on autosome protein 2 (1968 aa).

Residues 72-88 (TSSSFSSSLATTTTTSS) show a composition bias toward low complexity. 2 disordered regions span residues 72 to 252 (TSSS…TPTQ) and 271 to 364 (QVQQ…VQEQ). The segment covering 107 to 119 (SHHHPSSSHHHHP) has biased composition (basic residues). Low complexity-rich tracts occupy residues 120–134 (GQQQ…SHLQ), 144–165 (HPYY…YGQA), 219–232 (DQPS…LPPL), and 298–338 (LSSI…SSSS). Over residues 346–362 (PNASSSSLIKRQSQDVQ) the composition is skewed to polar residues. Residues 413–440 (YQCPNCNRNLANARNLQRHRQTCGSAQH) form a C2H2-type 1 zinc finger. Disordered regions lie at residues 451–499 (RSPP…LYSP) and 538–601 (WSRD…TLDP). Over residues 452–467 (SPPPCASAPPVAPPTA) the composition is skewed to pro residues. Over residues 472–482 (FQHHNSTGNLT) the composition is skewed to polar residues. Low complexity predominate over residues 483–498 (LSYSSSSSRHQSSLYS). The span at 570-594 (PLHHLDSFDSADHRKETPRECHEPD) shows a compositional bias: basic and acidic residues. The C2H2-type 2; degenerate zinc-finger motif lies at 651–672 (FTCEACKKSVSSERSLRRHYNT). Disordered stretches follow at residues 681–712 (AASG…GPEK) and 785–854 (VTSA…TGNP). The span at 690–702 (TTKRKPATKRPSK) shows a compositional bias: basic residues. The span at 794–804 (HQLPHQQPQQQ) shows a compositional bias: low complexity. The segment covering 812-824 (LLNEQDESADDDG) has biased composition (acidic residues). The segment covering 827–851 (RSSSGTVSNSTTTTTTATTTSSKST) has biased composition (low complexity). Residues 856–875 (FTCEHCARQLCSMSNLKRHR) form a C2H2-type 3; degenerate zinc finger. Disordered stretches follow at residues 882–905 (ASSS…TAPA), 975–1069 (GDAL…EHKN), 1083–1227 (RMDA…SPLD), and 1246–1273 (PGPL…SQQA). Composition is skewed to low complexity over residues 981-1015 (QQHQ…AGRI), 1023-1046 (ILNQ…MLNP), and 1108-1131 (PQRS…YQVQ). The span at 1136 to 1146 (PLPPMQLPPLQ) shows a compositional bias: pro residues. A compositionally biased stretch (low complexity) spans 1147–1185 (NPHNQQQQHQMLHQSQMNYQQVQQVQQVQHVQQQQNLQN). Composition is skewed to polar residues over residues 1201–1211 (APGNRSRSHSN) and 1251–1273 (QGQS…SQQA). The C2H2-type 4 zinc finger occupies 1274 to 1297 (YICPECKKTYASRKNVKRHRMAVH). Disordered regions lie at residues 1333–1478 (TPDS…ADEE), 1569–1608 (SVGL…QQQQ), 1624–1671 (HPPM…LTCS), and 1769–1822 (ADRQ…PSTN). The segment covering 1388 to 1403 (ERQEPPKKPVADDHKS) has biased composition (basic and acidic residues). Pro residues-rich tracts occupy residues 1407–1421 (PLPP…PPPY) and 1429–1445 (LNPP…PPLQ). Over residues 1589-1608 (QHPQQHPQQHPQQHPQQQQQ) the composition is skewed to low complexity. Over residues 1624 to 1633 (HPPMPVSQQF) the composition is skewed to polar residues. The C2H2-type 5; degenerate zinc finger occupies 1668–1694 (LTCSGCKKILGSDYSLRRHRAGCADVQ). Positions 1800-1811 (SSSSSSSTSSAS) are enriched in low complexity. Residues 1826-1858 (HYCQFPECGKNFSSEWNLARHTRESCKMTTRAH) form a C2H2-type 6 zinc finger.

Expressed in seam cells, intestine cells, pharyngeal muscles and nerve ring neurons.

Its subcellular location is the nucleus. It is found in the cytoplasm. In terms of biological role, RNA-binding protein, which regulates the expression of proteins required to control developmental timing of events during the L2 to L3 larval stage switch. Binds to the 3'UTR of the transcript of the heterochronic protein lin-28 to post-transcriptionally negatively regulate its expression in certain tissue types in the later larval stages. During larval development, controls the timing of seam cell division and terminal differentiation into adult alae. In vitro, it can also bind to DNA through its first zinc finger. May bind directly or indirectly to the promoter of the sex-determining factor xol-1 to activate its transcription. Its activation of xol-1 transcription controls sex determination and X chromosome dosage compensation to promote male development. Through the negative regulation of lin-28 transcript, it also has a role in the fox-1-sex-1-mediated determination of sexual fate. Acts in the intestine to play a role in regulating adult lifespan. The sequence is that of Signal element on autosome protein 2 from Caenorhabditis elegans.